The primary structure comprises 211 residues: Outer surface protein C (211 aa).

The signal sequence occupies residues 1–18 (MKKNTLSAILMTLFLFIS). A lipid anchor (N-palmitoyl cysteine) is attached at Cys-19. Residue Cys-19 is the site of S-diacylglycerol cysteine attachment.

It belongs to the OspC lipoprotein family. In terms of assembly, homodimer. Interacts with tick I.ricinus salivary protein Iric-1, Iric-2 and Iric-3. Binds human (host) plasminogen.

Its subcellular location is the cell outer membrane. It localises to the cell surface. In terms of biological role, major immunodominant protein in mammalian hosts. Required for initial stages of mammalian infection. Inhibits macrophage-mediated phagocytosis of the bacteria. Binds human plasminogen; this probably confers an extracellular protease activity on the bacteria that allows it to traverse tissue. Interaction with tick I.ricinus salivary protein Salp15 protects the bacteria from antibody-mediated killing in vitro and in vivo. The protein is Outer surface protein C of Borreliella burgdorferi (Lyme disease spirochete).